Here is a 398-residue protein sequence, read N- to C-terminus: Acetate kinase (398 aa).

N10 contributes to the Mg(2+) binding site. K17 contributes to the ATP binding site. R91 is a binding site for substrate. D148 (proton donor/acceptor) is an active-site residue. Residues H208 to G212, D283 to R285, and G331 to N335 each bind ATP. E385 provides a ligand contact to Mg(2+).

This sequence belongs to the acetokinase family. Homodimer. Requires Mg(2+) as cofactor. Mn(2+) serves as cofactor.

Its subcellular location is the cytoplasm. The catalysed reaction is acetate + ATP = acetyl phosphate + ADP. It functions in the pathway metabolic intermediate biosynthesis; acetyl-CoA biosynthesis; acetyl-CoA from acetate: step 1/2. Its function is as follows. Catalyzes the formation of acetyl phosphate from acetate and ATP. Can also catalyze the reverse reaction. The sequence is that of Acetate kinase from Shewanella pealeana (strain ATCC 700345 / ANG-SQ1).